The sequence spans 237 residues: Trypsin-1 (237 aa).

One can recognise a Peptidase S1 domain in the interval 1 to 237 (IVGGTDAVLG…HVDWIKANAV (237 aa)). A disulfide bridge connects residues cysteine 30 and cysteine 46. Histidine 45 (charge relay system) is an active-site residue. Ca(2+)-binding residues include glutamate 64, valine 69, and glutamate 74. The active-site Charge relay system is aspartate 96. 2 cysteine pairs are disulfide-bonded: cysteine 159–cysteine 174 and cysteine 185–cysteine 213. Serine 189 (charge relay system) is an active-site residue.

It belongs to the peptidase S1 family. Ca(2+) is required as a cofactor.

The protein localises to the secreted. It is found in the extracellular space. The enzyme catalyses Preferential cleavage: Arg-|-Xaa, Lys-|-Xaa.. The protein is Trypsin-1 of Astacus astacus (Noble crayfish).